We begin with the raw amino-acid sequence, 159 residues long: Ribosomal RNA large subunit methyltransferase H (159 aa).

S-adenosyl-L-methionine-binding positions include Leu-76, Gly-108, and 127–132 (FSHMTF).

This sequence belongs to the RNA methyltransferase RlmH family. Homodimer.

Its subcellular location is the cytoplasm. It carries out the reaction pseudouridine(1915) in 23S rRNA + S-adenosyl-L-methionine = N(3)-methylpseudouridine(1915) in 23S rRNA + S-adenosyl-L-homocysteine + H(+). Functionally, specifically methylates the pseudouridine at position 1915 (m3Psi1915) in 23S rRNA. In Halothermothrix orenii (strain H 168 / OCM 544 / DSM 9562), this protein is Ribosomal RNA large subunit methyltransferase H.